The primary structure comprises 87 residues: RNA-binding protein Hfq (87 aa).

The Sm domain occupies 9–68; sequence DPFLNTLRRERIPVSIYLVNGIKLQGYIESFDQFVILLKNSISQMIYKHAISTVVPNHTN. The segment at 66 to 87 is disordered; it reads HTNNQEHNQSQYNNNNACISKP.

Belongs to the Hfq family. In terms of assembly, homohexamer.

Functionally, RNA chaperone that binds small regulatory RNA (sRNAs) and mRNAs to facilitate mRNA translational regulation in response to envelope stress, environmental stress and changes in metabolite concentrations. Also binds with high specificity to tRNAs. This Wigglesworthia glossinidia brevipalpis protein is RNA-binding protein Hfq.